Consider the following 232-residue polypeptide: Small ribosomal subunit protein uS3 (232 aa).

Residues V39–R107 enclose the KH type-2 domain.

This sequence belongs to the universal ribosomal protein uS3 family. In terms of assembly, part of the 30S ribosomal subunit. Forms a tight complex with proteins S10 and S14.

Its function is as follows. Binds the lower part of the 30S subunit head. Binds mRNA in the 70S ribosome, positioning it for translation. In Aliivibrio fischeri (strain MJ11) (Vibrio fischeri), this protein is Small ribosomal subunit protein uS3.